A 79-amino-acid polypeptide reads, in one-letter code: Small ribosomal subunit protein bS18 (79 aa).

The protein belongs to the bacterial ribosomal protein bS18 family. In terms of assembly, part of the 30S ribosomal subunit. Forms a tight heterodimer with protein bS6.

Functionally, binds as a heterodimer with protein bS6 to the central domain of the 16S rRNA, where it helps stabilize the platform of the 30S subunit. This chain is Small ribosomal subunit protein bS18, found in Listeria innocua serovar 6a (strain ATCC BAA-680 / CLIP 11262).